The following is a 101-amino-acid chain: Feather keratin Cos2-3 (101 aa).

Ser-2 is modified (N-acetylserine).

It belongs to the avian keratin family. The avian keratins (F-ker, S-ker, C-ker and B-ker) are a complex mixture of very similar polypeptides.

This Columba livia (Rock dove) protein is Feather keratin Cos2-3.